Consider the following 386-residue polypeptide: Patatin-2-Kuras 3 (386 aa).

The first 23 residues, 1–23 (MATTKSVLVLFFMILATTSSTCA), serve as a signal peptide directing secretion. Positions 32-229 (LSIDGGGIKG…TVGDPALLSL (198 aa)) constitute a PNPLA domain. The GXGXXG signature appears at 36–41 (GGGIKG). Positions 75 to 79 (GTSTG) match the GXSXG motif. S77 (nucleophile) is an active-site residue. N115 carries an N-linked (GlcNAc...) asparagine glycan. D215 (proton acceptor) is an active-site residue. Positions 215–217 (DGA) match the DGA/G motif. A coiled-coil region spans residues 321–384 (ENALTGTTTE…DRKKLRANKA (64 aa)).

This sequence belongs to the patatin family. As to expression, tuber.

Its subcellular location is the vacuole. Functionally, probable lipolytic acyl hydrolase (LAH), an activity which is thought to be involved in the response of tubers to pathogens. The chain is Patatin-2-Kuras 3 (pat2-k3) from Solanum tuberosum (Potato).